A 368-amino-acid polypeptide reads, in one-letter code: Methionine import ATP-binding protein MetN (368 aa).

In terms of domain architecture, ABC transporter spans 5-260 (IELNNLSVQF…PKEALTKQFI (256 aa)). 41–48 (GYSGAGKS) contacts ATP.

It belongs to the ABC transporter superfamily. Methionine importer (TC 3.A.1.24) family. The complex is composed of two ATP-binding proteins (MetN), two transmembrane proteins (MetI) and a solute-binding protein (MetQ).

It localises to the cell membrane. The catalysed reaction is L-methionine(out) + ATP + H2O = L-methionine(in) + ADP + phosphate + H(+). It catalyses the reaction D-methionine(out) + ATP + H2O = D-methionine(in) + ADP + phosphate + H(+). Functionally, part of the ABC transporter complex MetNIQ involved in methionine import. Responsible for energy coupling to the transport system. The chain is Methionine import ATP-binding protein MetN from Lactococcus lactis subsp. cremoris (strain MG1363).